We begin with the raw amino-acid sequence, 1030 residues long: Protein KRBA1 (1030 aa).

5 disordered regions span residues 27 to 56 (EPGRAVGGGSHADEGQEPAGCGDPQGGQPR), 80 to 208 (KGAM…NSPL), 225 to 255 (HPETSPSFLPPLPSLGTSRLTRADLGPGSPP), 281 to 505 (EAQD…GLEN), and 634 to 788 (GGPS…PASS). S101 carries the phosphoserine modification. The span at 102–114 (PEAAAAREPCPLR) shows a compositional bias: low complexity. Residues 124–143 (PTSQPHLATTPTDSSCSSGP) are compositionally biased toward polar residues. The segment covering 157–168 (TADKPWPTRKEG) has biased composition (basic and acidic residues). Phosphoserine is present on residues S177, S182, S184, S229, S253, and S355. Low complexity predominate over residues 372 to 389 (PEAQAASASSSPLEALEA). Over residues 397–418 (NGSSPSQLPPTSCSQNPQPGDS) the composition is skewed to polar residues. The span at 419 to 437 (RSQKPELQPHRSHSEEATR) shows a compositional bias: basic and acidic residues. 2 stretches are compositionally biased toward low complexity: residues 485-502 (QGQHPGKGSPPGSSPLQG) and 642-651 (PGSSSSFSGS). Basic and acidic residues predominate over residues 654-674 (EDPRPEPDLWKPLPQERDRLP). The span at 689–698 (TPAGSSGGSP) shows a compositional bias: gly residues. The segment covering 760 to 784 (QGPPELPSESPPPELPPPEAAPPVL) has biased composition (pro residues). Residues 799 to 832 (LQQELHSLGAALAEKLDRLATALAGLAQEVATMR) are a coiled coil. A compositionally biased stretch (basic residues) spans 870 to 887 (RHLPYWRQKGPTRPKPKI). Residues 870–1030 (RHLPYWRQKG…EHRDPRWGAH (161 aa)) form a disordered region. The segment covering 913 to 923 (PLPPDAPPAEP) has biased composition (pro residues). Composition is skewed to low complexity over residues 929–953 (SSSQQLLSSTPSCHAAPPAHPLLAH) and 966–984 (PAALPLQGASPPAASADAD). Basic and acidic residues predominate over residues 1019-1030 (GGEHRDPRWGAH).

Expressed in brain (cerebellum).

The sequence is that of Protein KRBA1 (KRBA1) from Homo sapiens (Human).